We begin with the raw amino-acid sequence, 213 residues long: Urease accessory protein UreE (213 aa).

A disordered region spans residues 170–213 (EHHGRSHSHSHSHSHDHDHDHDHDHDHDHQHGPSCSHGHGHGHR). Over residues 182–200 (HSHDHDHDHDHDHDHDHQH) the composition is skewed to basic and acidic residues.

This sequence belongs to the UreE family.

Its subcellular location is the cytoplasm. Involved in urease metallocenter assembly. Binds nickel. Probably functions as a nickel donor during metallocenter assembly. In Burkholderia thailandensis (strain ATCC 700388 / DSM 13276 / CCUG 48851 / CIP 106301 / E264), this protein is Urease accessory protein UreE.